The following is a 150-amino-acid chain: Large ribosomal subunit protein bL9 (150 aa).

This sequence belongs to the bacterial ribosomal protein bL9 family.

Binds to the 23S rRNA. The protein is Large ribosomal subunit protein bL9 of Streptococcus pyogenes serotype M5 (strain Manfredo).